Here is a 191-residue protein sequence, read N- to C-terminus: Adenine phosphoribosyltransferase (191 aa).

The protein belongs to the purine/pyrimidine phosphoribosyltransferase family. As to quaternary structure, homodimer.

Its subcellular location is the cytoplasm. It carries out the reaction AMP + diphosphate = 5-phospho-alpha-D-ribose 1-diphosphate + adenine. Its pathway is purine metabolism; AMP biosynthesis via salvage pathway; AMP from adenine: step 1/1. Its function is as follows. Catalyzes a salvage reaction resulting in the formation of AMP, that is energically less costly than de novo synthesis. The polypeptide is Adenine phosphoribosyltransferase (Clavibacter sepedonicus (Clavibacter michiganensis subsp. sepedonicus)).